A 309-amino-acid chain; its full sequence is Acetylglutamate kinase (309 aa).

Residues glycine 82–glycine 83, arginine 104, and asparagine 206 each bind substrate.

Belongs to the acetylglutamate kinase family. ArgB subfamily.

Its subcellular location is the cytoplasm. It catalyses the reaction N-acetyl-L-glutamate + ATP = N-acetyl-L-glutamyl 5-phosphate + ADP. It participates in amino-acid biosynthesis; L-arginine biosynthesis; N(2)-acetyl-L-ornithine from L-glutamate: step 2/4. Catalyzes the ATP-dependent phosphorylation of N-acetyl-L-glutamate. This is Acetylglutamate kinase from Cupriavidus metallidurans (strain ATCC 43123 / DSM 2839 / NBRC 102507 / CH34) (Ralstonia metallidurans).